The sequence spans 122 residues: Large ribosomal subunit protein uL14 (122 aa).

It belongs to the universal ribosomal protein uL14 family. Part of the 50S ribosomal subunit. Forms a cluster with proteins L3 and L19. In the 70S ribosome, L14 and L19 interact and together make contacts with the 16S rRNA in bridges B5 and B8.

Its function is as follows. Binds to 23S rRNA. Forms part of two intersubunit bridges in the 70S ribosome. The chain is Large ribosomal subunit protein uL14 from Thermosipho melanesiensis (strain DSM 12029 / CIP 104789 / BI429).